Here is an 88-residue protein sequence, read N- to C-terminus: Phosphocarrier protein HPr (88 aa).

The HPr domain maps to 2-88; sequence AQKTFKVTAD…ETMKSEGLGE (87 aa). The residue at position 12 (serine 12) is a Phosphoserine. The active-site Pros-phosphohistidine intermediate; alternate is the histidine 15. Position 15 is a tele-phosphohistidine; alternate (histidine 15). Residue serine 46 is modified to Phosphoserine; by HPrK/P.

This sequence belongs to the HPr family. Post-translationally, phosphorylated during sporulation.

The protein localises to the cytoplasm. With respect to regulation, phosphorylation on Ser-46 inhibits the phosphoryl transfer from enzyme I to HPr. General (non sugar-specific) component of the phosphoenolpyruvate-dependent sugar phosphotransferase system (sugar PTS). This major carbohydrate active-transport system catalyzes the phosphorylation of incoming sugar substrates concomitantly with their translocation across the cell membrane. The phosphoryl group from phosphoenolpyruvate (PEP) is transferred to the phosphoryl carrier protein HPr by enzyme I. Phospho-HPr then transfers it to the PTS EIIA domain. Its function is as follows. P-Ser-HPr interacts with the catabolite control protein A (CcpA), forming a complex that binds to DNA at the catabolite response elements cre, operator sites preceding a large number of catabolite-regulated genes. Thus, P-Ser-HPr is a corepressor in carbon catabolite repression (CCR), a mechanism that allows bacteria to coordinate and optimize the utilization of available carbon sources. P-Ser-HPr also plays a role in inducer exclusion, in which it probably interacts with several non-PTS permeases and inhibits their transport activity. The protein is Phosphocarrier protein HPr (ptsH) of Bacillus subtilis (strain 168).